Reading from the N-terminus, the 421-residue chain is NADH-quinone oxidoreductase subunit F (421 aa).

Positions 1–25 (MLKEEDKIFTNLHGQQSHDLKSSKK) are disordered. Positions 16-25 (QSHDLKSSKK) are enriched in basic and acidic residues. 54–63 (GRGGAGFSTG) serves as a coordination point for NAD(+). Position 166–213 (166–213 (GAGAYICGEETALLESLEGKKGMPRLKPPFPAGFGLYGCPTTINNVES)) interacts with FMN. The [4Fe-4S] cluster site is built by Cys344, Cys347, Cys350, and Cys390.

It belongs to the complex I 51 kDa subunit family. Requires FMN as cofactor. The cofactor is [4Fe-4S] cluster.

It carries out the reaction a quinone + NADH + 5 H(+)(in) = a quinol + NAD(+) + 4 H(+)(out). NDH-1 shuttles electrons from NADH, via FMN and iron-sulfur (Fe-S) centers, to quinones in the respiratory chain. Couples the redox reaction to proton translocation (for every two electrons transferred, four hydrogen ions are translocated across the cytoplasmic membrane), and thus conserves the redox energy in a proton gradient. This Rickettsia massiliae (strain Mtu5) protein is NADH-quinone oxidoreductase subunit F (nuoF).